Here is a 1057-residue protein sequence, read N- to C-terminus: Probable sucrose-phosphate synthase 1 (1057 aa).

Over residues 103–115 (RRLERERGRREAT) the composition is skewed to basic and acidic residues. Disordered regions lie at residues 103-143 (RRLE…STRS), 439-459 (PQDG…ASPD), and 670-693 (RHPQ…GDSL). Positions 442–452 (GDMDGETEGNE) are enriched in acidic residues.

It belongs to the glycosyltransferase 1 family. As to quaternary structure, homodimer or homotetramer.

The enzyme catalyses beta-D-fructose 6-phosphate + UDP-alpha-D-glucose = sucrose 6(F)-phosphate + UDP + H(+). Its pathway is glycan biosynthesis; sucrose biosynthesis; sucrose from D-fructose 6-phosphate and UDP-alpha-D-glucose: step 1/2. Activity is regulated by phosphorylation and moderated by concentration of metabolites and light. Functionally, plays a role in photosynthetic sucrose synthesis by catalyzing the rate-limiting step of sucrose biosynthesis from UDP-glucose and fructose- 6-phosphate. Involved in the regulation of carbon partitioning in the leaves of plants. May regulate the synthesis of sucrose and therefore play a major role as a limiting factor in the export of photoassimilates out of the leaf. Plays a role for sucrose availability that is essential for plant growth and fiber elongation. This Citrus unshiu (Satsuma mandarin) protein is Probable sucrose-phosphate synthase 1 (SPS1).